The primary structure comprises 212 residues: Pyrrolidone-carboxylate peptidase (212 aa).

Residues glutamate 78, cysteine 141, and histidine 165 contribute to the active site.

It belongs to the peptidase C15 family. Homotetramer.

The protein resides in the cytoplasm. The enzyme catalyses Release of an N-terminal pyroglutamyl group from a polypeptide, the second amino acid generally not being Pro.. Removes 5-oxoproline from various penultimate amino acid residues except L-proline. In Staphylococcus aureus, this protein is Pyrrolidone-carboxylate peptidase (pcp).